The sequence spans 724 residues: Protein arginine N-methyltransferase 1.6 (724 aa).

SAM-dependent MTase PRMT-type domains follow at residues 61–388 (NDQP…YNLK) and 395–721 (HERT…IVTH). Active-site residues include glutamate 183 and glutamate 192.

The protein belongs to the class I-like SAM-binding methyltransferase superfamily. Protein arginine N-methyltransferase family. PRMT7 subfamily.

Its function is as follows. Arginine methyltransferase that can both catalyze the formation of omega-N monomethylarginine (MMA) and symmetrical dimethylarginine (sDMA). In Arabidopsis thaliana (Mouse-ear cress), this protein is Protein arginine N-methyltransferase 1.6 (PRMT16).